Here is a 134-residue protein sequence, read N- to C-terminus: Small ribosomal subunit protein uS8c (134 aa).

This sequence belongs to the universal ribosomal protein uS8 family. In terms of assembly, part of the 30S ribosomal subunit.

The protein localises to the plastid. The protein resides in the chloroplast. In terms of biological role, one of the primary rRNA binding proteins, it binds directly to 16S rRNA central domain where it helps coordinate assembly of the platform of the 30S subunit. The chain is Small ribosomal subunit protein uS8c (rps8) from Helianthus annuus (Common sunflower).